Consider the following 167-residue polypeptide: NAD(P)H-quinone oxidoreductase subunit I, chloroplastic (167 aa).

4Fe-4S ferredoxin-type domains are found at residues 55-84 and 95-124; these read GRIHFEFDKCIACEVCVRVCPIDLPVVDWK and LNYSIDFGICIFCGNCVEYCPTNCLSMTEE. [4Fe-4S] cluster contacts are provided by Cys-64, Cys-67, Cys-70, Cys-74, Cys-104, Cys-107, Cys-110, and Cys-114.

This sequence belongs to the complex I 23 kDa subunit family. In terms of assembly, NDH is composed of at least 16 different subunits, 5 of which are encoded in the nucleus. Requires [4Fe-4S] cluster as cofactor.

Its subcellular location is the plastid. The protein localises to the chloroplast thylakoid membrane. It catalyses the reaction a plastoquinone + NADH + (n+1) H(+)(in) = a plastoquinol + NAD(+) + n H(+)(out). The enzyme catalyses a plastoquinone + NADPH + (n+1) H(+)(in) = a plastoquinol + NADP(+) + n H(+)(out). Its function is as follows. NDH shuttles electrons from NAD(P)H:plastoquinone, via FMN and iron-sulfur (Fe-S) centers, to quinones in the photosynthetic chain and possibly in a chloroplast respiratory chain. The immediate electron acceptor for the enzyme in this species is believed to be plastoquinone. Couples the redox reaction to proton translocation, and thus conserves the redox energy in a proton gradient. In Barbarea verna (Land cress), this protein is NAD(P)H-quinone oxidoreductase subunit I, chloroplastic.